The chain runs to 210 residues: Na(+)-translocating NADH-quinone reductase subunit D (210 aa).

Helical transmembrane passes span 10 to 30, 42 to 62, 72 to 92, 103 to 123, 131 to 151, and 178 to 198; these read VLIG…GVCS, LVMT…ISLI, IIVQ…VLQA, VFVG…AYAM, FMDG…VGFV, and NGLL…IWII.

The protein belongs to the NqrDE/RnfAE family. Composed of six subunits; NqrA, NqrB, NqrC, NqrD, NqrE and NqrF.

Its subcellular location is the cell inner membrane. It catalyses the reaction a ubiquinone + n Na(+)(in) + NADH + H(+) = a ubiquinol + n Na(+)(out) + NAD(+). Its function is as follows. NQR complex catalyzes the reduction of ubiquinone-1 to ubiquinol by two successive reactions, coupled with the transport of Na(+) ions from the cytoplasm to the periplasm. NqrA to NqrE are probably involved in the second step, the conversion of ubisemiquinone to ubiquinol. This chain is Na(+)-translocating NADH-quinone reductase subunit D, found in Shewanella pealeana (strain ATCC 700345 / ANG-SQ1).